Here is a 2514-residue protein sequence, read N- to C-terminus: MIRQVTDCEASTFYVEFTSMTMDESTGTNGHGVTMGSDTTNGATPNGVYANGTNGTLAHGVLRGAQVPIAICGMACRLPGGLTTPDELWDFLLAKKDARCRVPHSRYDIDSYYSDTKKPGTVSTEYGYFLDESVDVGALDTSFFSMTRTEVERADPQQRLMLEVAREAFEDAGVTHWRGKTIGTYIGNFGEDWLEMFGKETQPWGIHRISGSGDFVVANRLSYEFDLQGPSMTIRTACSSALVALNEACAAISRGDCGSALVGGVNLILAPGMSMAMQEQGVLSSDGSCKTFSADANGYARGEAVTAIFIKPLADALRDGNPIRAVVRATSHNADGKTPTLSQPSTDAQEALMRRAYELGGITDYAETAMVECHGTGTPTGDPIEAAAVARVFGDKGVYIGSVKPNLGHTEAASGLVSLLKMVKALEHRVIPPNIKFTSPNPNIPFAEGKLTVPTDPLPWPKDRLERVSVNSFGIGGANAHVILESAATYNVPVAVHETPETPQLLLFTANSSKSITRMIDGYKAWVEQNPDKVSDLAYTLARRREHLPHRAFAIFRNGVLESVSQPANSKAAKPPSVVMVFTGQGAQWPQMGRDLLRSNDVFRSSIRLLDQHLQTIAGEKPQYSIEEELKKPAKKSRLSLAEFSQPLCTAVQIALVDTLASAGIHPDAVVGHSSGEIAAAYAAGALSAGEAITAAHHRGAVTSRQKRVGTMAAIGMSWAETEKYLVPNVTIACDNSPRSITISGDVDAVKSVVAAIKEAQPQMLARLLQVDKAYHSYHMKEIGEDYQSLINEEVVGREPSALFFSSVTGQVLGPDHSTWSKYWQENLESPVRFREAVTAILKHDVGKNAVFLEVGPHGALAGPLRQIFTQATSSAPYVSVMARNQDCNASFLAAIGALHSLNVDVNLEALFPTGCCLPDLPRYPWNHEGSYWYESRLSKEWRNRRFPYHDLLGARVAESSDGEPAWRNMFHVTNTPWMRDHEVGEHIVFPFCGYIALAGEAIRQLTNVEEGFSVRNIIVSTALVLSEGKPTEMMATFRPHRLTNFLNSAWWEFTVSAYNGRNWTKHCTGEVCAQSSAPEQTQDPAGLPRTLNVRKWYEKMGKGGLNLGGSFQTLETMTTSTSEQRAVGKVVNGRQGDEANYHIHPTVLDATLQILGAAAVKGYARKTKTWLPTSIDKFTVHRCASDMVTSVSAQLSSNFSVVGDGRCTSGGTTVVDAVGIRMSLADGAGAADISDTHAASRCEWRPDIDFLDVHELFRSPANRTDHLRLLEELGDICLLLSQWHFSEASNPIPPHLQQYMAWVGSQSGAIAFRLPSTWTGLDHEAISDRIDSILSQLADTPAAPVANAIHQVCVNMESLLSGESLDSILPGETLTHVHEFLGQVDRREFIQLLSHSKPNLRILEIGTGNGVSLHRDILAELTRPDGEILCAKYTLTAPGYVVATTQEKIFPNMQFASLDISQDPFEQGFEDVGYDLIIAVNALRECKNTEESLANLRKLLSSDGRLLLQELCPSSRWIRYVLGVLPTWWAGPADEPIETPYLSQEEWQTTIAAAGFGDIEAVALDSEEPHQVTTTMVVRQAREAPMKKVTVLVEEEGPAVTHIVSELEKEGYEVTRCRLEDDPPAGQDVMSLLDIEQPFFHGIDEARFLLFKSFLLGLQDRNAGMLWTTHLIDIGCRDPRYGQVLGLARTIRTEQLADLGTCQIDSFDSSASIRGLLRLFAKFQTRQGDEELNPDFEWAIVNGQVQVARFHPFILADELLVSEDSKNEMATLNVRTPGRVNSLHYARHERKDLEKDEVEVEVYCAGLNFRDILVALGIVELPVRLFGIEAAGTVTRVGADVSPDDLQVGDRVVCFCRKDAFSTYTTTLAAVCVRIPDSLTFDQAGTMLIPYFTAIHSMVNVGRVTKGQSVLIHSACGGVGLAAIQVAQMLEADVYVTVGSEEKVKYLMENYHIPRHKIFHSRDRSFVDGVMRETNGRGMDFILNSLSGELLHATWSCVAEFGTLLEIGKRDLIGDGKLDMRPFLANRNYCCVDIDGLWKRIHVARALIFSILDFYDKGYITPLPMTIFPATQTQDAFRFMEKGQHIGRVGVSFKPADGGPQLGLETTKRALTIAFNGSASYLMVGGLGGIGRAVSTWMVDHGARELVYLSRSAGRTPKDDDFVTELQSMGCAVRLVSGDTTKLADVQRAIAAATYPLKGIVQMSMVVANENFTRMSFAEWTASTAPKVQGTWNLHDASVAAGINLDFFVMFSSVSGIVGQAGQANYASGNSFLDAFAQYRNGLGLPASVVDMGAVEDVGWISEHQGMMGKMSRSGFKPVLEQEVIDAMAISMLVHNQARQAIADEALAADSKATSYFVHKNTFLVGLALLIPLHDPSNYVIWKKDRRMASYHNNSTVAAATAASTDVLKTYLSSAKADPSILKSPEAAKLFAVEIGKRLFDLLLKPHEEPNTSWPLLDLGLDSLVALELRAWIKQVFSFDLPMLEMMSIGSLDILGQYAANEVYRITTDNNEG.

The region spanning 66–486 is the Ketosynthase family 3 (KS3) domain; it reads QVPIAICGMA…GANAHVILES (421 aa). Residues C238, H374, and H409 each act as for beta-ketoacyl synthase activity in the active site. Residues 580–904 form the Malonyl-CoA:ACP transacylase (MAT) domain; sequence MVFTGQGAQW…AIGALHSLNV (325 aa). Residues 950-1079 are N-terminal hotdog fold; that stretch reads HDLLGARVAE…GEVCAQSSAP (130 aa). A PKS/mFAS DH domain is found at 950–1240; it reads HDLLGARVAE…AADISDTHAA (291 aa). H982 functions as the Proton acceptor; for dehydratase activity in the catalytic mechanism. Residues 1089 to 1240 form a C-terminal hotdog fold region; that stretch reads PRTLNVRKWY…AADISDTHAA (152 aa). D1150 acts as the Proton donor; for dehydratase activity in catalysis. The segment at 1319–1578 is methyltransferase (CMet) domain; the sequence is WTGLDHEAIS…EPHQVTTTMV (260 aa). Positions 1779 to 2092 constitute an Enoyl reductase (ER) domain; it reads GRVNSLHYAR…KGQHIGRVGV (314 aa). The Ketoreductase (KR) domain maps to 2120–2297; the sequence is ASYLMVGGLG…ASVVDMGAVE (178 aa). Positions 2427–2504 constitute a Carrier domain; sequence EAAKLFAVEI…ILGQYAANEV (78 aa). The residue at position 2464 (S2464) is an O-(pantetheine 4'-phosphoryl)serine.

Requires pantetheine 4'-phosphate as cofactor.

It catalyses the reaction holo-[ACP] + 8 malonyl-CoA + acetyl-CoA + 5 AH2 + 8 NADPH + 16 H(+) = (3R)-hydroxyoctadeca-4,10-dienoyl-[ACP] + 5 A + 8 CO2 + 8 NADP(+) + 9 CoA + 7 H2O. Its pathway is secondary metabolite biosynthesis. Its function is as follows. Highly reducing polyketide synthase; part of the gene cluster that mediates the biosynthesis of sphingofungins, bioactive molecules acting as sphingolipid inhibitors via inhibiting serine palmitoyl transferase (SPT). Within the pathway, sphB catalyzes the first step of sphingofungin biosynthesis by condensing 8 units of malonyl-CoA with one starter unit of acetyl-CoA, leading to an C18 polyketide precursor 3-hydroxyoctadeca-4,10-dienoyl-ACP containing one delta-6 desaturation and one delta-12 desaturation. The PKS sphB does not contain any putative thioesterase domain for releasing the nascent polyketide chain and it has been suggested that aminoacyl transferases can facilitate the polyketide chain release. The aminoacyl transferase sphA uses the sphB product to produce 3-keto-presphingofungin by adding an aminomalonate molecule. SphF then reduces the C-3 ketone of 3-keto-presphingofungin which leads to presphingofungin. The cytochrome P450 monooxygenase sphH converts presphingofungin into sphingofungin B1 which is further converted to sphingofungin B by the dioxygenase sphC. SphC is also able to convert presphingofungin into sphingofungin B2. The acetyltransferase sphE acetylates sphingofungin B to produce sphingofungin C, but can also convert sphingofungin B1 into sphingofungin C1 and sphingofungin B2 into sphingofungin C2. Finally, sphingofungin C can be spontaneously converted into sphingofungin D. The polypeptide is Highly reducing polyketide synthase sphB (Aspergillus fumigatus (strain CBS 144.89 / FGSC A1163 / CEA10) (Neosartorya fumigata)).